Reading from the N-terminus, the 146-residue chain is VHWSAEEKQLITGLWGKVNVADCGAEALARLLIVYPWTQRFFASFGNLSSPTAINGNPMVRAHGKKVLTSFGEAVKNLDNIKNTFAQLSELHCDKLHVDPENFRLLGDILIIVLAAHFAKDFTPDSQAAWQKLVRVVAHALARKYH.

A Globin domain is found at 2-146; that stretch reads HWSAEEKQLI…VAHALARKYH (145 aa). 2 residues coordinate heme b: His63 and His92.

It belongs to the globin family. Heterotetramer of two alpha chains and two beta chains. In terms of tissue distribution, red blood cells.

Involved in oxygen transport from the lung to the various peripheral tissues. In Chroicocephalus ridibundus (Black-headed gull), this protein is Hemoglobin subunit beta/beta' (HBB).